The sequence spans 265 residues: Putative Tubby-like protein 4 (265 aa).

An F-box domain is found at 1–44; that stretch reads MPPELLRDVLMRIERSEDTWPSRKNVVSCVGVCKNWRQIFKEIV. An FBD domain is found at 228–250; that stretch reads SYELKLALYFAKNSAILKKFVLR.

The protein belongs to the TUB family.

The polypeptide is Putative Tubby-like protein 4 (Arabidopsis thaliana (Mouse-ear cress)).